The chain runs to 309 residues: Ribonuclease Z (309 aa).

Residues His63, His65, Asp67, His68, His141, Asp212, and His270 each coordinate Zn(2+). Catalysis depends on Asp67, which acts as the Proton acceptor.

Belongs to the RNase Z family. As to quaternary structure, homodimer. It depends on Zn(2+) as a cofactor.

The catalysed reaction is Endonucleolytic cleavage of RNA, removing extra 3' nucleotides from tRNA precursor, generating 3' termini of tRNAs. A 3'-hydroxy group is left at the tRNA terminus and a 5'-phosphoryl group is left at the trailer molecule.. Zinc phosphodiesterase, which displays some tRNA 3'-processing endonuclease activity. Probably involved in tRNA maturation, by removing a 3'-trailer from precursor tRNA. The protein is Ribonuclease Z of Halalkalibacterium halodurans (strain ATCC BAA-125 / DSM 18197 / FERM 7344 / JCM 9153 / C-125) (Bacillus halodurans).